We begin with the raw amino-acid sequence, 415 residues long: Teichoic acid D-alanyltransferase (415 aa).

Over 1 to 16 (MIDFLKQLPHLEPYGN) the chain is Extracellular. The chain crosses the membrane as a helical span at residues 17 to 36 (PFYFIYLGIALLPIFIGLFF). Topologically, residues 37–40 (KKRF) are cytoplasmic. The helical transmembrane segment at 41-56 (AIYECLVSITFIVLAL) threads the bilayer. Residues 57–60 (TGTH) lie on the Extracellular side of the membrane. The chain crosses the membrane as a helical span at residues 61–87 (ASQILALLFYIVWQIIWVYSYKRYRSQ). Residues 88–90 (RDN) are Cytoplasmic-facing. A helical transmembrane segment spans residues 91 to 115 (KWVFYLHSFLVVLPLILVKVEPTIN). Residues 116–125 (GTQSLLNFLG) are Extracellular-facing. Residues 126–142 (ISYLTFRAVGMIIEMRD) traverse the membrane as a helical segment. Residues 143 to 149 (GVLKEFT) are Cytoplasmic-facing. Residues 150–179 (LGEFLRFMLFMPTFTSGPIDRFKRFNEDYQ) lie within the membrane without spanning it. Residues 180 to 183 (SIPN) lie on the Cytoplasmic side of the membrane. Residues 184–227 (RDELLNMLEQAVKYIMLGFLYKFVLAQIFGSMLLPPLKAQALSQ) form a helical membrane-spanning segment. The Extracellular segment spans residues 228 to 232 (GGIFN). A helical transmembrane segment spans residues 233 to 264 (LPTLGVMYVYGFDLFFDFAGYSMFALAVSNLM). Residues 265–274 (GIKSPINFDK) are Cytoplasmic-facing. Residues 275-311 (PFISRDMKEFWNRWHMSLSFWFRDFVFMRLVIVLMRN) lie within the membrane without spanning it. Over 312-316 (KVFKN) the chain is Cytoplasmic. A helical membrane pass occupies residues 317 to 336 (RNTTSNVAYIINMMVMGFWH). The active site involves H336. The Extracellular segment spans residues 337–339 (GIT). Residues 340–373 (WYYIAYGIFHGIGLVINDAWLRKKKTINKDRKKA) traverse the membrane as a helical segment. The Cytoplasmic portion of the chain corresponds to 374 to 381 (GLKPLPEN). The chain crosses the membrane as a helical span at residues 382-404 (KWTKALGIFITFNTVMLSFLIFS). At 405-415 (GFLNDLWFTKK) the chain is on the extracellular side.

Belongs to the membrane-bound acyltransferase family.

Its subcellular location is the cell membrane. The protein operates within cell wall biogenesis; lipoteichoic acid biosynthesis. Its function is as follows. O-acyltransferase that catalyzes D-alanylation of both teichoic acid and lipoteichoic acid (LTA). D-alanylation of LTA plays an important role in modulating the properties of the cell wall in Gram-positive bacteria, influencing the net charge of the cell wall. Catalyzes D-alanylation from DltC carrier protein. The protein is Teichoic acid D-alanyltransferase of Streptococcus thermophilus (strain ATCC BAA-250 / LMG 18311).